The following is a 501-amino-acid chain: Growth/differentiation factor 5 (501 aa).

Positions 1–27 are cleaved as a signal peptide; sequence MRLPKLLTFLLWYLAWLDLEFICTVLG. The propeptide occupies 28–381; sequence APDLGQRPQG…YLFSQRRKRR (354 aa). A disordered region spans residues 29 to 169; it reads PDLGQRPQGT…EPFRPPPITP (141 aa). A compositionally biased stretch (pro residues) spans 99 to 111; sequence PRPGGPEPKPGHP. Positions 148-162 are enriched in basic and acidic residues; sequence KAREPGPPREPKEPF. The N-linked (GlcNAc...) asparagine glycan is linked to Asn-189. Residues 246–265 are disordered; sequence PSDTAKPAAPGGGRAAQLKL. Cystine bridges form between Cys-400–Cys-466, Cys-429–Cys-498, and Cys-433–Cys-500.

It belongs to the TGF-beta family. Homodimer; disulfide-linked. Interacts with serine proteases, HTRA1 and HTRA3. Following LPS binding, may form a complex with CXCR4, HSP90AA1 and HSPA8. Interacts with high affinity with NOG; inhibits chondrogenesis. Interacts with high affinity with BMPR1B and lower affinity with BMPR1A; positively regulates chondrocyte differentiation and induces SMAD dependent signaling. Interacts with FBN1 (via N-terminal domain) and FBN2. Interacts with TGFBR3. Predominantly expressed in long bones during embryonic development. Expressed in monocytes (at protein level).

It localises to the secreted. The protein resides in the cell membrane. Its function is as follows. Growth factor involved in bone and cartilage formation. During cartilage development regulates differentiation of chondrogenic tissue through two pathways. Firstly, positively regulates differentiation of chondrogenic tissue through its binding of high affinity with BMPR1B and of less affinity with BMPR1A, leading to induction of SMAD1-SMAD5-SMAD8 complex phosphorylation and then SMAD protein signaling transduction. Secondly, negatively regulates chondrogenic differentiation through its interaction with NOG. Required to prevent excessive muscle loss upon denervation. This function requires SMAD4 and is mediated by phosphorylated SMAD1/5/8. Binds bacterial lipopolysaccharide (LPS) and mediates LPS-induced inflammatory response, including TNF secretion by monocytes. In Homo sapiens (Human), this protein is Growth/differentiation factor 5 (GDF5).